Here is a 550-residue protein sequence, read N- to C-terminus: Transcription factor 7-like 1-D (550 aa).

The interval 1–61 (MPQLNSGXGD…SENHSSDSDS (61 aa)) is interaction with CTNNB1-A. Disordered regions lie at residues 1–77 (MPQL…EKPR), 182–212 (GTPP…PYYP), 390–473 (WSAR…SLTT), and 488–514 (ASKS…SRPI). Composition is skewed to basic and acidic residues over residues 17–32 (ELIR…EKSP) and 52–77 (SENH…EKPR). The tract at residues 109-311 (LGGITCPMVP…SPNLSMKSNV (203 aa)) is interaction with AES and TLE4-A. The segment at residues 323–391 (IKKPLNAFML…LHSQLYPSWS (69 aa)) is a DNA-binding region (HMG box). Residues 406–415 (KQSPEMENYT) show a composition bias toward basic and acidic residues. Residues 407 to 550 (QSPEMENYTK…PLPLVARSSD (144 aa)) are interaction with CTBP-B. Low complexity predominate over residues 444 to 455 (SPATPSAALASP).

Belongs to the TCF/LEF family. In terms of assembly, interacts with csnk1e, ctnnb1-A, ctbp-B, dact1-A and gsk3b. May interact with ase and tle4-A. In terms of processing, phosphorylated. Phosphorylation by csnk1e promotes binding to ctnnb1-A while phosphorylation by gsk3b may reverse this effect.

Its subcellular location is the nucleus. Its function is as follows. Participates in the Wnt signaling pathway. Binds to DNA and acts as a repressor in the absence of ctnnb1-A and possibly ctnnb1-B, and as an activator in the presence of these proteins. Required early in development for the establishment of the dorsal body axis in response to maternal Wnt signaling. This is Transcription factor 7-like 1-D (tcf7l1-d) from Xenopus laevis (African clawed frog).